The sequence spans 98 residues: Large ribosomal subunit protein uL23 (98 aa).

Belongs to the universal ribosomal protein uL23 family. In terms of assembly, part of the 50S ribosomal subunit. Contacts protein L29, and trigger factor when it is bound to the ribosome.

Functionally, one of the early assembly proteins it binds 23S rRNA. One of the proteins that surrounds the polypeptide exit tunnel on the outside of the ribosome. Forms the main docking site for trigger factor binding to the ribosome. The polypeptide is Large ribosomal subunit protein uL23 (Gluconacetobacter diazotrophicus (strain ATCC 49037 / DSM 5601 / CCUG 37298 / CIP 103539 / LMG 7603 / PAl5)).